A 405-amino-acid polypeptide reads, in one-letter code: Elongation factor Tu (405 aa).

Positions 10-215 constitute a tr-type G domain; the sequence is KPHVNIGTIG…AVDSYIPTPE (206 aa). The segment at 19–26 is G1; the sequence is GHVDHGKT. 19–26 contributes to the GTP binding site; the sequence is GHVDHGKT. Thr-26 is a binding site for Mg(2+). A G2 region spans residues 61-65; sequence GITIN. The interval 82 to 85 is G3; the sequence is DCPG. Residues 82–86 and 137–140 contribute to the GTP site; these read DCPGH and NKVD. A G4 region spans residues 137 to 140; the sequence is NKVD. A G5 region spans residues 175–177; sequence SAL.

It belongs to the TRAFAC class translation factor GTPase superfamily. Classic translation factor GTPase family. EF-Tu/EF-1A subfamily. As to quaternary structure, monomer.

It is found in the cytoplasm. It catalyses the reaction GTP + H2O = GDP + phosphate + H(+). In terms of biological role, GTP hydrolase that promotes the GTP-dependent binding of aminoacyl-tRNA to the A-site of ribosomes during protein biosynthesis. This chain is Elongation factor Tu, found in Deinococcus radiodurans (strain ATCC 13939 / DSM 20539 / JCM 16871 / CCUG 27074 / LMG 4051 / NBRC 15346 / NCIMB 9279 / VKM B-1422 / R1).